The following is a 62-amino-acid chain: [Ser6, Val10, Asp11]-phyllokinin (62 aa).

Positions Met1–Cys22 are cleaved as a signal peptide. The propeptide occupies Glu23–Asp51. The tract at residues Glu24–Asp62 is disordered. Residues Glu30–Ser42 are compositionally biased toward acidic residues.

Belongs to the frog skin active peptide (FSAP) family. Bradykinin-related peptide subfamily. As to expression, expressed by the skin glands.

The protein localises to the secreted. Its function is as follows. Induces relaxation of rat smooth muscle from tail artery and contraction of that from ileum, urinary bladder and uterus. Binds to both bradykinin receptor B1 (BDKRB1) and B2 (BDKRB2). This chain is [Ser6, Val10, Asp11]-phyllokinin, found in Agalychnis spurrelli (Gliding leaf frog).